Consider the following 175-residue polypeptide: Co-chaperone protein HscB homolog (175 aa).

Positions 7–79 constitute a J domain; sequence SHFDLFHLPA…LKRASYLLSL (73 aa).

It belongs to the HscB family. As to quaternary structure, interacts with HscA and stimulates its ATPase activity.

Functionally, co-chaperone involved in the maturation of iron-sulfur cluster-containing proteins. Seems to help targeting proteins to be folded toward HscA. This is Co-chaperone protein HscB homolog from Burkholderia cenocepacia (strain ATCC BAA-245 / DSM 16553 / LMG 16656 / NCTC 13227 / J2315 / CF5610) (Burkholderia cepacia (strain J2315)).